We begin with the raw amino-acid sequence, 325 residues long: Elongation factor P--(R)-beta-lysine ligase (325 aa).

76–78 is a binding site for substrate; that stretch reads SPE. Residues 100-102 and Asn-109 contribute to the ATP site; that span reads RNE. Position 118 (Tyr-118) interacts with substrate. 244–245 serves as a coordination point for ATP; sequence EL. Glu-251 contacts substrate. Gly-300 is an ATP binding site.

It belongs to the class-II aminoacyl-tRNA synthetase family. EpmA subfamily. As to quaternary structure, homodimer.

It catalyses the reaction D-beta-lysine + L-lysyl-[protein] + ATP = N(6)-((3R)-3,6-diaminohexanoyl)-L-lysyl-[protein] + AMP + diphosphate + H(+). Functionally, with EpmB is involved in the beta-lysylation step of the post-translational modification of translation elongation factor P (EF-P). Catalyzes the ATP-dependent activation of (R)-beta-lysine produced by EpmB, forming a lysyl-adenylate, from which the beta-lysyl moiety is then transferred to the epsilon-amino group of a conserved specific lysine residue in EF-P. The sequence is that of Elongation factor P--(R)-beta-lysine ligase from Yersinia enterocolitica serotype O:8 / biotype 1B (strain NCTC 13174 / 8081).